We begin with the raw amino-acid sequence, 95 residues long: Protein TusB (95 aa).

The protein belongs to the DsrH/TusB family. As to quaternary structure, heterohexamer, formed by a dimer of trimers. The hexameric TusBCD complex contains 2 copies each of TusB, TusC and TusD. The TusBCD complex interacts with TusE.

Its subcellular location is the cytoplasm. Part of a sulfur-relay system required for 2-thiolation of 5-methylaminomethyl-2-thiouridine (mnm(5)s(2)U) at tRNA wobble positions. In Escherichia coli O81 (strain ED1a), this protein is Protein TusB.